Reading from the N-terminus, the 883-residue chain is MNEQYSALRSNVSMLGKVLGETIKDALGEHILERVETIRKLSKSSRAGNDANRQELLTTLQNLSNDELLPVARAFSQFLNLANTAEQYHSISPKGEAASNPEVIARTLRKLKNQPELSEDTIKKAVESLSLELVLTAHPTEITRRTLIHKMVEVNACLKQLDNKDIADYEHNQLMRRLRQLIAQSWHTDEIRKLRPSPVDEAKWGFAVVENSLWQGVPNYLRELNEQLEENLGYKLPVEFAPVRFTSWMGGDRDGNPNVTADITRHVLLLSRWKATDLFLKDIQVLVSELSMVEATPELLALVGEEGAAEPYRYLMKNLRSRLMATQAWLEARLKGEELPKPEGLLTQNEELWEPLYACYQSLQACGMGIIANGDLLDTLRRVKCFGVPLVRIDIRQESTRHTEALGELTRYLGIGDYESWSEADKQAFLIRELNSKRPLLPRNWQPSAETREVLDTCQVIAEAPQGSIAAYVISMAKTPSDVLAVHLLLKEAGIGFAMPVAPLFETLDDLNNANDVMTQLLNIDWYRGLIQGKQMVMIGYSDSAKDAGVMAASWAQYQAQDALIKTCEKAGIELTLFHGRGGSIGRGGAPAHAALLSQPPGSLKGGLRVTEQGEMIRFKYGLPEITVSSLSLYTGAILEANLLPPPEPKESWRCIMDELSVISCDVYRGYVRENKDFVPYFRSATPEQELGKLPLGSRPAKRRPTGGVESLRAIPWIFAWTQNRLMLPAWLGAGTALQKVVEDGKQSELEAMCRDWPFFSTRLGMLEMVFAKADLWLAEYYDQRLVDKALWPLGKELRNLQEEDIKVVLAIANDSHLMADLPWIAESIQLRNIYTDPLNVLQAELLHRSRQAEKEGQEPDPRVEQALMVTIAGIAAGMRNTG.

Active-site residues include histidine 138 and lysine 546.

Belongs to the PEPCase type 1 family. Mg(2+) is required as a cofactor.

It catalyses the reaction oxaloacetate + phosphate = phosphoenolpyruvate + hydrogencarbonate. In terms of biological role, forms oxaloacetate, a four-carbon dicarboxylic acid source for the tricarboxylic acid cycle. The chain is Phosphoenolpyruvate carboxylase from Escherichia coli O81 (strain ED1a).